The primary structure comprises 210 residues: Orotate phosphoribosyltransferase (210 aa).

5-phospho-alpha-D-ribose 1-diphosphate-binding positions include arginine 94, lysine 98, histidine 100, and 120-128; that span reads EDLISTGGS. Serine 124 lines the orotate pocket.

Belongs to the purine/pyrimidine phosphoribosyltransferase family. PyrE subfamily. As to quaternary structure, homodimer. Requires Mg(2+) as cofactor.

The catalysed reaction is orotidine 5'-phosphate + diphosphate = orotate + 5-phospho-alpha-D-ribose 1-diphosphate. The protein operates within pyrimidine metabolism; UMP biosynthesis via de novo pathway; UMP from orotate: step 1/2. Catalyzes the transfer of a ribosyl phosphate group from 5-phosphoribose 1-diphosphate to orotate, leading to the formation of orotidine monophosphate (OMP). In Bacillus cereus (strain ATCC 10987 / NRS 248), this protein is Orotate phosphoribosyltransferase.